Reading from the N-terminus, the 359-residue chain is Anhydro-N-acetylmuramic acid kinase (359 aa).

G12–D19 contributes to the ATP binding site.

The protein belongs to the anhydro-N-acetylmuramic acid kinase family.

The enzyme catalyses 1,6-anhydro-N-acetyl-beta-muramate + ATP + H2O = N-acetyl-D-muramate 6-phosphate + ADP + H(+). It participates in amino-sugar metabolism; 1,6-anhydro-N-acetylmuramate degradation. The protein operates within cell wall biogenesis; peptidoglycan recycling. Its function is as follows. Catalyzes the specific phosphorylation of 1,6-anhydro-N-acetylmuramic acid (anhMurNAc) with the simultaneous cleavage of the 1,6-anhydro ring, generating MurNAc-6-P. Is required for the utilization of anhMurNAc either imported from the medium or derived from its own cell wall murein, and thus plays a role in cell wall recycling. The chain is Anhydro-N-acetylmuramic acid kinase from Sulfurovum sp. (strain NBC37-1).